The primary structure comprises 302 residues: uncharacterized protein (302 aa).

The region spanning 13–89 (QTLFKFLKKT…VNLDIVYEDN (77 aa)) is the S4 RNA-binding domain. Asp141 is an active-site residue.

Belongs to the pseudouridine synthase RluA family.

It catalyses the reaction a uridine in RNA = a pseudouridine in RNA. This is an uncharacterized protein from Mycoplasma capricolum subsp. capricolum (strain California kid / ATCC 27343 / NCTC 10154).